Here is a 182-residue protein sequence, read N- to C-terminus: Isopentenyl-diphosphate Delta-isomerase (182 aa).

Histidine 25 and histidine 32 together coordinate Mn(2+). The region spanning 30-164 (LLHLAFSSWL…PWAFSPWMVM (135 aa)) is the Nudix hydrolase domain. Cysteine 67 is a catalytic residue. Cysteine 67 is a binding site for Mg(2+). Mn(2+) is bound at residue histidine 69. Residue glutamate 87 coordinates Mg(2+). Mn(2+) contacts are provided by glutamate 114 and glutamate 116. The active site involves glutamate 116.

It belongs to the IPP isomerase type 1 family. Homodimer. Mg(2+) is required as a cofactor. Requires Mn(2+) as cofactor.

The protein resides in the cytoplasm. It catalyses the reaction isopentenyl diphosphate = dimethylallyl diphosphate. It participates in isoprenoid biosynthesis; dimethylallyl diphosphate biosynthesis; dimethylallyl diphosphate from isopentenyl diphosphate: step 1/1. In terms of biological role, catalyzes the 1,3-allylic rearrangement of the homoallylic substrate isopentenyl (IPP) to its highly electrophilic allylic isomer, dimethylallyl diphosphate (DMAPP). In Shigella boydii serotype 4 (strain Sb227), this protein is Isopentenyl-diphosphate Delta-isomerase.